Reading from the N-terminus, the 141-residue chain is Nucleoside diphosphate kinase (141 aa).

Residues lysine 11, phenylalanine 59, arginine 87, threonine 93, arginine 104, and asparagine 114 each coordinate ATP. Histidine 117 (pros-phosphohistidine intermediate) is an active-site residue.

It belongs to the NDK family. As to quaternary structure, homotetramer. It depends on Mg(2+) as a cofactor.

Its subcellular location is the cytoplasm. The catalysed reaction is a 2'-deoxyribonucleoside 5'-diphosphate + ATP = a 2'-deoxyribonucleoside 5'-triphosphate + ADP. It carries out the reaction a ribonucleoside 5'-diphosphate + ATP = a ribonucleoside 5'-triphosphate + ADP. Functionally, major role in the synthesis of nucleoside triphosphates other than ATP. The ATP gamma phosphate is transferred to the NDP beta phosphate via a ping-pong mechanism, using a phosphorylated active-site intermediate. This is Nucleoside diphosphate kinase from Acidovorax ebreus (strain TPSY) (Diaphorobacter sp. (strain TPSY)).